The sequence spans 182 residues: Early upstream open reading frame (182 aa).

It belongs to the EUO family.

In Chlamydophila psittaci (strain ATCC VR-125 / 6BC) (Chlamydia psittaci), this protein is Early upstream open reading frame.